The following is a 266-amino-acid chain: Undecaprenyl-diphosphatase (266 aa).

Helical transmembrane passes span 4-24 (WLIALILGLIEGLTEFIPVSS), 46-66 (VLIQLGAILAITGVYFGRLWG), 82-102 (IGILLAFLPAVFVGVAAHDFI), 105-125 (VLYETPALVCSTLIIGGFILL), 142-162 (YPLKTAFIIGLFQCLALVPGV), 182-202 (AAEFSFFLAMPTMAGAFAYDL), 216-236 (LIGIGFLAALVSGVFVVKTVL), and 244-264 (FAPFAYWRIAVGVVGLALLYI).

The protein belongs to the UppP family.

The protein localises to the cell inner membrane. It carries out the reaction di-trans,octa-cis-undecaprenyl diphosphate + H2O = di-trans,octa-cis-undecaprenyl phosphate + phosphate + H(+). Its function is as follows. Catalyzes the dephosphorylation of undecaprenyl diphosphate (UPP). Confers resistance to bacitracin. The protein is Undecaprenyl-diphosphatase of Caulobacter vibrioides (strain ATCC 19089 / CIP 103742 / CB 15) (Caulobacter crescentus).